The following is a 385-amino-acid chain: Meiosis-specific protein MEI4 (385 aa).

Residues 1–126 (MDVQKWYLRT…LSQHFVESCT (126 aa)) are interaction with REC114. A disordered region spans residues 86–110 (AQEPKSSESTLTSMEDSGCDLSNEQ). The segment covering 92–107 (SESTLTSMEDSGCDLS) has biased composition (polar residues).

Belongs to the MEI4L family. In terms of assembly, part of the MCD recombinosome complex, at least composed of IHO1, REC114 and MEI4. Forms a complex with REC114; the interaction is required for MEI4 stability. Interacts (via N-terminal domain) with REC114 (via C-terminal domain). Interacts with IHO1.

Its subcellular location is the chromosome. Functionally, required for DNA double-strand breaks (DSBs) formation in unsynapsed regions during meiotic recombination. Probably acts by forming a complex with IHO1 and REC114, which activates DSBs formation in unsynapsed regions, an essential step to ensure completion of synapsis. This Homo sapiens (Human) protein is Meiosis-specific protein MEI4.